A 270-amino-acid chain; its full sequence is MSREEEKSPFTEHLGELRDRLVRSFIAVGVGFVIAYCFKERLFDILTAPLIAAMGEGQKMIFTGLPEAFFTYLKVSLLTGVILATPVLFYEFWMFVSPGLYRKEKRFVLPVVILSIFFFCVGSSFGYFIVFPYGFQFFLGFSSDTIQAMPSMKEYLGFASKMLLAFGFVFELPLVLTFMARMGLVSVEFLKKNRKYAILIFFTGAALITPPDVVTQIMMAIPLMILYEISIIGARVFGKKKDSDEEEAAENSDVQTDKSTDDTTPGEDQN.

The next 6 membrane-spanning stretches (helical) occupy residues 25–45, 75–95, 111–131, 156–176, 195–211, and 213–233; these read FIAV…LFDI, VSLL…FWMF, VVIL…FIVF, LGFA…PLVL, KYAI…ITPP, and VVTQ…SIIG. The interval 243–270 is disordered; it reads SDEEEAAENSDVQTDKSTDDTTPGEDQN.

Belongs to the TatC family. As to quaternary structure, the Tat system comprises two distinct complexes: a TatABC complex, containing multiple copies of TatA, TatB and TatC subunits, and a separate TatA complex, containing only TatA subunits. Substrates initially bind to the TatABC complex, which probably triggers association of the separate TatA complex to form the active translocon.

It is found in the cell inner membrane. Its function is as follows. Part of the twin-arginine translocation (Tat) system that transports large folded proteins containing a characteristic twin-arginine motif in their signal peptide across membranes. Together with TatB, TatC is part of a receptor directly interacting with Tat signal peptides. This is Sec-independent protein translocase protein TatC from Desulforapulum autotrophicum (strain ATCC 43914 / DSM 3382 / VKM B-1955 / HRM2) (Desulfobacterium autotrophicum).